Reading from the N-terminus, the 309-residue chain is MSIRIIPQDELGSSEKRTADMIPPLLFPRLKNVYNRRAERLRELAENNPLGDYLRFAALIAHAQEVVLYDHPLEMDLTARIKEANDQGKPPLDIHVLPRDKHWQKLLHSLIAELKPEMNGPALAVIENLEKASEQELEQMASALFASDFASVSSDKAPFIWAALSLYWAQMASLIPGKARAEYGEARQYCPVCGSMPVSSMVQIDTTQGLRYLHCNLCETEWHVVRVKCSNCEQSRDLHYWSLENEQAAVKAESCGDCGTYLKILYQEKDPKVEAVADDLASLVLDARMEQEGFARSSINPFLFPGEGE.

The protein belongs to the FdhE family.

It localises to the cytoplasm. Its function is as follows. Necessary for formate dehydrogenase activity. The chain is Protein FdhE from Salmonella paratyphi A (strain ATCC 9150 / SARB42).